A 445-amino-acid chain; its full sequence is Mutanase Pc12g07500 (445 aa).

Positions 1–21 (MIWKSLFSALAILTHILPALT) are cleaved as a signal peptide. Residues N386 and N437 are each glycosylated (N-linked (GlcNAc...) asparagine).

It belongs to the glycosyl hydrolase 71 family. Monomer.

The protein localises to the secreted. It carries out the reaction Endohydrolysis of (1-&gt;3)-alpha-D-glucosidic linkages in isolichenin, pseudonigeran and nigeran.. In terms of biological role, hydrolyzes 1,3-alpha-glucan predominantly into pentasaccharides. May enhance the efficacy of fungal antibiotics by degrading bacterial exopolysaccharides. The polypeptide is Mutanase Pc12g07500 (Penicillium rubens (strain ATCC 28089 / DSM 1075 / NRRL 1951 / Wisconsin 54-1255) (Penicillium chrysogenum)).